Here is a 764-residue protein sequence, read N- to C-terminus: Protective antigen (764 aa).

Positions 1-29 are cleaved as a signal peptide; that stretch reads MKKRKVLIPLMALSTILVSSTGNLEVIQA. Residues 30-287 form a domain 1, calcium-binding; LF and EF binding sites region; the sequence is EVKQENRLLN…PEARHPLVAA (258 aa). A PA14 domain is found at 43–179; sequence SSSQGLLGYY…NKKEVISSDN (137 aa). A disordered region spans residues 176-214; it reads SSDNLQLPELKQKSSNSRKKRSTSAGPTVPDRDNDGIPD. Ca(2+) contacts are provided by D206, D208, D210, I212, and E217. The segment at 231–239 is alpha-clamp; it reads FLSPWISNI. Ca(2+)-binding residues include S251, K254, and D264. The segment at 288–516 is domain 2, membrane insertion and heptamerization; it reads YPIVHVDMEN…SEVLPQIQET (229 aa). Residues 302-333 are disordered; sequence KNEDQSTQNTDSQTRTISKNTSTSRTHTSEVH. The segment covering 306 to 327 has biased composition (polar residues); the sequence is QSTQNTDSQTRTISKNTSTSRT. The next 2 beta stranded transmembrane spans lie at 331 to 342 and 345 to 354; these read EVHGNAEVHASF and IGGSVSAGFS. The domain 3, heptamerization stretch occupies residues 517 to 624; that stretch reads TARIIFNGKD…KMNILIRDKR (108 aa). The interval 625 to 764 is domain 4, binding to the receptor; sequence FHYDRNNIAV…IFSKKGYEIG (140 aa).

Belongs to the bacterial binary toxin family. In terms of assembly, interacts with host ANTXR1 and ANTXR2. As to quaternary structure, homooligomer; homooligomerizes to form homoheptamers (PA-63(7)) or homooctamers (PA-63(8)). PA-63(7) or PA-63(8) form ring-shaped oligomers that are in a pre-pore conformation, which do not penetrate the host membrane. PA-63(8) displays an enhanced stability, suggesting that this form circulates in the blood to reach and exert toxicity even in distant tissues. Interacts with lethal factor (LF) and edema factor (EF); can bind LF and EF simultaneously and interaction takes place following homooligomerization on the host cell membrane. PA-63(7) homoheptamer interacts with three molecules of LF to form the PA(7)LF(3) complex, in which the relative position of the N-terminal alpha-helices in the three LFs determines which factor is translocated first. Proteolytic activation by FURIN cleaves the protein in two parts, PA-20 and PA-63; the latter is the mature protein. The cleavage occurs at the cell surface and probably in the serum of infected animals as well; both native and cleaved PA are able to bind to the cell receptor. The release of PA-20 from the remaining receptor-bound PA-63 exposes the binding site for EF and LF, and promotes oligomerization and internalization of the protein.

It is found in the secreted. The protein resides in the host cell membrane. It localises to the host endosome membrane. Functionally, protective antigen constitutes one of the three proteins composing the anthrax toxin; it mediates attachment to host cells and translocation of edema factor (EF) and lethal factor (LF) into the host cytoplasm. PA associated with LF forms the lethal toxin (LeTx) and causes death when injected; PA associated with EF forms the edema toxin (EdTx) and produces edema. PA induces immunity to infection with anthrax. In terms of biological role, mediates the attachment to host cells by binding host cell receptors ANTXR1 and ANTXR2. Following host cell surface attachment, PA is cleaved by FURIN to generate the PA-63 (Protective antigen PA-63) form, which constitutes the mature form of the protein that oligomerizes and forms a pore to translocate the enzymatic toxin components edema factor (EF) and lethal factor (LF) into the host cytosol. Mature form that oligomerizes and forms a pore to translocate the enzymatic toxin components edema factor (EF) and lethal factor (LF) into the host cytosol. Following attachment to host cell receptors and cleavage by FURIN, homooligomerizes to form ring-shaped oligomers that are in a pre-pore conformation, and associates with EF and LF. Toxin-leaded complexes are then endocytosed in a clathrin-dependent process, followed by a conformational change of oligomerized PA-63 from the pre-pore to pore state, which is triggered by the low pH in the endosome. Once active, the pore mediates unfolding of EF and LF, which pass through the pore and translocate into the host cytosol. This is Protective antigen (pagA) from Bacillus anthracis.